The sequence spans 485 residues: Choline/ethanolamine transporter flvcr2b (485 aa).

Topologically, residues 1–46 (MDTRFNDINRVKMGDESKSVDGEVNDNTYYSKTDAEVNFEHRYTTP) are cytoplasmic. The chain crosses the membrane as a helical span at residues 47 to 71 (ETRLYKKRWVIVCLFSSYSLCNSYQ). Asparagine 68 and tryptophan 72 together coordinate choline. Residues 72-89 (WIQYGIINNIFMRFYGVD) are Extracellular-facing. The chain crosses the membrane as a helical span at residues 90–117 (SFTIDWMSMIYMLTYIPLIFPVSWLLDK). The Cytoplasmic segment spans residues 118 to 119 (KG). A helical membrane pass occupies residues 120–139 (LRVIALVAAALNCAGTWIKV). Over 140 to 146 (ASARPDL) the chain is Extracellular. A helical membrane pass occupies residues 147-175 (FPVTFLGQFTCSVAQVFILGMPSRIASVW). Positions 161 and 165 each coordinate choline. Over 176 to 180 (FGSDE) the chain is Cytoplasmic. The chain crosses the membrane as a helical span at residues 181 to 206 (VSTACSIGVFGNQLGIAIGFLVPPIL). Over 207–211 (VPNVD) the chain is Extracellular. A helical transmembrane segment spans residues 212–241 (DLDELAAHIRVMFYITAGVATFLFVLVVIV). Over 242 to 277 (FQERPEIPPTLAQAAARRISPESYSYTASILRLLRN) the chain is Cytoplasmic. Residues 278–308 (KAFILLVITYGLNVGCFYAVSTLLNRMIIEH) traverse the membrane as a helical segment. Tyrosine 295 serves as a coordination point for choline. Topologically, residues 309-312 (YPGE) are extracellular. A helical membrane pass occupies residues 313–341 (EVNAGRIGLTIVVAGMVGSLICGIWLDRS). Residues 342–343 (KT) lie on the Cytoplasmic side of the membrane. A helical transmembrane segment spans residues 344-366 (YKQTTLAVYLMSLMGLVIYAFTL). The Extracellular segment spans residues 367–369 (DLH). The chain crosses the membrane as a helical span at residues 370 to 399 (HLWVVFITAGALGFFMTGYLPLGFEFAVEL). Over 400-407 (TYPESEGT) the chain is Cytoplasmic. Residues 408-433 (SSGLLNCSAQVFGIIFTICQGKIMDS) traverse the membrane as a helical segment. Glutamine 417 is a choline binding site. The Extracellular segment spans residues 434–435 (FG). The chain crosses the membrane as a helical span at residues 436 to 458 (TLAGNLFLCAFLLIGTIITGCIK). Over 459 to 485 (SDLRRQLANQQAQTADHLDTSPTQTRF) the chain is Cytoplasmic.

Belongs to the major facilitator superfamily. Feline leukemia virus subgroup C receptor (TC 2.A.1.28.1) family.

The protein localises to the cell membrane. It localises to the mitochondrion membrane. It is found in the endoplasmic reticulum membrane. The catalysed reaction is choline(out) = choline(in). It carries out the reaction ethanolamine(in) = ethanolamine(out). It catalyses the reaction heme b(in) = heme b(out). Its function is as follows. Choline uniporter that specifically mediates choline uptake at the blood-brain-barrier. Responsible for the majority of choline uptake across the blood-brain-barrier from the circulation into the brain. Choline, a nutrient critical for brain development, is a precursor of phosphatidylcholine, as well as betaine. Also mediates transport of ethanolamine. Choline and ethanolamine transport is not coupled with proton transport and is exclusively driven by the choline gradient across the plasma membrane. Also acts as a heme b transporter. The sequence is that of Choline/ethanolamine transporter flvcr2b from Danio rerio (Zebrafish).